The chain runs to 182 residues: Flavin prenyltransferase UbiX (182 aa).

Residues 9–11 (GAS), S35, 86–89 (SIKT), and R121 each bind FMN. Dimethylallyl phosphate contacts are provided by Y151 and R167.

This sequence belongs to the UbiX/PAD1 family.

The enzyme catalyses dimethylallyl phosphate + FMNH2 = prenylated FMNH2 + phosphate. Flavin prenyltransferase that catalyzes the synthesis of the prenylated FMN cofactor (prenyl-FMN) for 4-hydroxy-3-polyprenylbenzoic acid decarboxylase UbiD. The prenyltransferase is metal-independent and links a dimethylallyl moiety from dimethylallyl monophosphate (DMAP) to the flavin N5 and C6 atoms of FMN. In Archaeoglobus fulgidus (strain ATCC 49558 / DSM 4304 / JCM 9628 / NBRC 100126 / VC-16), this protein is Flavin prenyltransferase UbiX.